The chain runs to 187 residues: Interferon beta (187 aa).

Residues 1-21 (MTNKCLLQIALLLCFSTTALS) form the signal peptide. Position 24 is a phosphotyrosine (tyrosine 24). Cysteine 52 and cysteine 162 form a disulfide bridge. N-linked (GlcNAc...) asparagine glycosylation is present at asparagine 101.

The protein belongs to the alpha/beta interferon family. Monomer.

Its subcellular location is the secreted. Type I interferon cytokine that plays a key role in the innate immune response to infection, developing tumors and other inflammatory stimuli. Signals via binding to high-affinity (IFNAR2) and low-affinity (IFNAR1) heterodimeric receptor, activating the canonical Jak-STAT signaling pathway resulting in transcriptional activation or repression of interferon-regulated genes that encode the effectors of the interferon response, such as antiviral proteins, regulators of cell proliferation and differentiation, and immunoregulatory proteins. Signals mostly via binding to a IFNAR1-IFNAR2 heterodimeric receptor, but can also function with IFNAR1 alone and independently of Jak-STAT pathways. Elicits a wide variety of responses, including antiviral and antibacterial activities, and can regulate the development of B-cells, myelopoiesis and lipopolysaccharide (LPS)-inducible production of tumor necrosis factor. Plays a role in neuronal homeostasis by regulating dopamine turnover and protecting dopaminergic neurons: acts by promoting neuronal autophagy and alpha-synuclein clearance, thereby preventing dopaminergic neuron loss. IFNB1 is more potent than interferon-alpha (IFN-alpha) in inducing the apoptotic and antiproliferative pathways required for control of tumor cell growth. The protein is Interferon beta of Homo sapiens (Human).